The following is a 147-amino-acid chain: Hemoglobin subunit delta (147 aa).

Residues 3–147 (HLTADEKAAV…VAAALAHKYH (145 aa)) enclose the Globin domain. Heme b-binding residues include His64 and His93.

The protein belongs to the globin family. Heterotetramer of two delta chains and two alpha chains. As to expression, red blood cells.

This Carlito syrichta (Philippine tarsier) protein is Hemoglobin subunit delta (HBD).